We begin with the raw amino-acid sequence, 99 residues long: Beta-2-microglobulin (99 aa).

The Ig-like C1-type domain occupies 5-92 (PNVQVYSRHP…KHVTLKEPMT (88 aa)). A disulfide bond links Cys-25 and Cys-80.

This sequence belongs to the beta-2-microglobulin family. Heterodimer of an alpha chain and a beta chain. Beta-2-microglobulin is the beta-chain of major histocompatibility complex class I molecules.

Its subcellular location is the secreted. Functionally, component of the class I major histocompatibility complex (MHC). Involved in the presentation of peptide antigens to the immune system. The protein is Beta-2-microglobulin (B2M) of Oryctolagus cuniculus (Rabbit).